We begin with the raw amino-acid sequence, 137 residues long: Large ribosomal subunit protein bL17 (137 aa).

Belongs to the bacterial ribosomal protein bL17 family. Part of the 50S ribosomal subunit. Contacts protein L32.

The protein is Large ribosomal subunit protein bL17 of Bradyrhizobium sp. (strain ORS 278).